The sequence spans 446 residues: Keratin, type I cytoskeletal 25 (446 aa).

Residues 1–74 are head; the sequence is MSLRLSSGSR…VNEGGLLSGN (74 aa). The segment at 75–110 is coil 1A; the sequence is EKVTMQNLNDRLASYLDNVQALQEANADLEQKIKGW. The IF rod domain maps to 75 to 390; that stretch reads EKVTMQNLND…LLIGGDEGAC (316 aa). Residues 111–132 form a linker 1 region; it reads YEKFGPGSCRGLDHDYSRYFPI. Residues 133–224 form a coil 1B region; sequence IDDLKNQIIT…KNHKEEMQAL (92 aa). The segment at 225–247 is linker 12; it reads QCAAGGNVNVEMNAAPGVDLTVL. Residues 248 to 386 are coil 2; sequence LNNMRAEYEA…ETYCLLIGGD (139 aa). The segment at 387-446 is tail; it reads EGACKSSSYKSKDYGSGNAGNQIKDPVKAIVVKKVLEEVDQRSKILTTRLHSLEEKSQSN. S438 carries the post-translational modification Phosphoserine.

It belongs to the intermediate filament family. As to quaternary structure, heterodimer of a type I and a type II keratin. Heterodimer with type II keratin KRT5 leading to the formation of keratin intermediate filament (KIF) network. Interacts with KRT6A to form filaments.

It localises to the cytoplasm. Essential for the proper assembly of type I and type II keratin protein complexes and formation of keratin intermediate filaments in the inner root sheath (irs). Plays a role in the cytoskeleton organization. The polypeptide is Keratin, type I cytoskeletal 25 (Mus musculus (Mouse)).